Here is a 307-residue protein sequence, read N- to C-terminus: ATP-dependent (S)-NAD(P)H-hydrate dehydratase (307 aa).

A YjeF C-terminal domain is found at Met1–Val291. Residues Gly96 and Asn150–Arg156 each bind (6S)-NADPHX. ATP-binding positions include Lys194–Asp198 and Ser214–Gly223. Asp224 lines the (6S)-NADPHX pocket.

The protein belongs to the NnrD/CARKD family. Requires Mg(2+) as cofactor.

It catalyses the reaction (6S)-NADHX + ATP = ADP + phosphate + NADH + H(+). The catalysed reaction is (6S)-NADPHX + ATP = ADP + phosphate + NADPH + H(+). In terms of biological role, catalyzes the dehydration of the S-form of NAD(P)HX at the expense of ATP, which is converted to ADP. Together with NAD(P)HX epimerase, which catalyzes the epimerization of the S- and R-forms, the enzyme allows the repair of both epimers of NAD(P)HX, a damaged form of NAD(P)H that is a result of enzymatic or heat-dependent hydration. The polypeptide is ATP-dependent (S)-NAD(P)H-hydrate dehydratase (Caenorhabditis briggsae).